A 430-amino-acid chain; its full sequence is Serine--tRNA ligase (430 aa).

L-serine is bound at residue Thr235 to Glu237. Residue Arg266–Glu268 coordinates ATP. Glu289 is an L-serine binding site. Glu353–Ser356 provides a ligand contact to ATP. Ser388 is an L-serine binding site.

This sequence belongs to the class-II aminoacyl-tRNA synthetase family. Type-1 seryl-tRNA synthetase subfamily. As to quaternary structure, homodimer. The tRNA molecule binds across the dimer.

It is found in the cytoplasm. It carries out the reaction tRNA(Ser) + L-serine + ATP = L-seryl-tRNA(Ser) + AMP + diphosphate + H(+). The catalysed reaction is tRNA(Sec) + L-serine + ATP = L-seryl-tRNA(Sec) + AMP + diphosphate + H(+). It participates in aminoacyl-tRNA biosynthesis; selenocysteinyl-tRNA(Sec) biosynthesis; L-seryl-tRNA(Sec) from L-serine and tRNA(Sec): step 1/1. Functionally, catalyzes the attachment of serine to tRNA(Ser). Is also able to aminoacylate tRNA(Sec) with serine, to form the misacylated tRNA L-seryl-tRNA(Sec), which will be further converted into selenocysteinyl-tRNA(Sec). This is Serine--tRNA ligase from Azoarcus sp. (strain BH72).